We begin with the raw amino-acid sequence, 150 residues long: 3-dehydroquinate dehydratase (150 aa).

The Proton acceptor role is filled by Tyr-26. Positions 77, 83, and 90 each coordinate substrate. His-103 functions as the Proton donor in the catalytic mechanism. Substrate contacts are provided by residues Leu-104–Ser-105 and Arg-114.

The protein belongs to the type-II 3-dehydroquinase family. As to quaternary structure, homododecamer.

It carries out the reaction 3-dehydroquinate = 3-dehydroshikimate + H2O. It functions in the pathway metabolic intermediate biosynthesis; chorismate biosynthesis; chorismate from D-erythrose 4-phosphate and phosphoenolpyruvate: step 3/7. Functionally, catalyzes a trans-dehydration via an enolate intermediate. This is 3-dehydroquinate dehydratase from Photorhabdus laumondii subsp. laumondii (strain DSM 15139 / CIP 105565 / TT01) (Photorhabdus luminescens subsp. laumondii).